The following is a 455-amino-acid chain: Ribulose bisphosphate carboxylase large chain (455 aa).

Lysine 5 carries the N6,N6,N6-trimethyllysine modification. Residues asparagine 114 and threonine 164 each coordinate substrate. Catalysis depends on lysine 166, which acts as the Proton acceptor. Residue lysine 168 participates in substrate binding. Lysine 192, aspartate 194, and glutamate 195 together coordinate Mg(2+). An N6-carboxylysine modification is found at lysine 192. Catalysis depends on histidine 285, which acts as the Proton acceptor. 3 residues coordinate substrate: arginine 286, histidine 318, and serine 370.

It belongs to the RuBisCO large chain family. Type I subfamily. As to quaternary structure, heterohexadecamer of 8 large chains and 8 small chains; disulfide-linked. The disulfide link is formed within the large subunit homodimers. Mg(2+) is required as a cofactor. The disulfide bond which can form in the large chain dimeric partners within the hexadecamer appears to be associated with oxidative stress and protein turnover.

Its subcellular location is the plastid. It is found in the chloroplast. It carries out the reaction 2 (2R)-3-phosphoglycerate + 2 H(+) = D-ribulose 1,5-bisphosphate + CO2 + H2O. The catalysed reaction is D-ribulose 1,5-bisphosphate + O2 = 2-phosphoglycolate + (2R)-3-phosphoglycerate + 2 H(+). Its function is as follows. RuBisCO catalyzes two reactions: the carboxylation of D-ribulose 1,5-bisphosphate, the primary event in carbon dioxide fixation, as well as the oxidative fragmentation of the pentose substrate in the photorespiration process. Both reactions occur simultaneously and in competition at the same active site. The chain is Ribulose bisphosphate carboxylase large chain from Brownea coccinea (Rose of Venezuela).